Reading from the N-terminus, the 201-residue chain is Superoxide dismutase [Fe] (201 aa).

Fe cation is bound by residues histidine 27, histidine 79, aspartate 161, and histidine 165.

Belongs to the iron/manganese superoxide dismutase family. In terms of assembly, homodimer. It depends on Fe cation as a cofactor.

It catalyses the reaction 2 superoxide + 2 H(+) = H2O2 + O2. Its function is as follows. Destroys superoxide anion radicals which are normally produced within the cells and which are toxic to biological systems. The sequence is that of Superoxide dismutase [Fe] (sodB) from Synechococcus elongatus (strain ATCC 33912 / PCC 7942 / FACHB-805) (Anacystis nidulans R2).